We begin with the raw amino-acid sequence, 144 residues long: Large ribosomal subunit protein uL13 (144 aa).

Belongs to the universal ribosomal protein uL13 family. Part of the 50S ribosomal subunit.

This protein is one of the early assembly proteins of the 50S ribosomal subunit, although it is not seen to bind rRNA by itself. It is important during the early stages of 50S assembly. The sequence is that of Large ribosomal subunit protein uL13 from Desulfovibrio desulfuricans (strain ATCC 27774 / DSM 6949 / MB).